The sequence spans 293 residues: Probable xyloglucan endotransglucosylase/hydrolase protein 5 (293 aa).

The N-terminal stretch at 1–21 (MGRLSSTLCLTFLILATVAFG) is a signal peptide. A GH16 domain is found at 23–220 (PPKKSINVPF…WEKAPFVASY (198 aa)). Glu106 serves as the catalytic Nucleophile. Glu110 (proton donor) is an active-site residue. Residue Glu110 participates in xyloglucan binding. N-linked (GlcNAc...) asparagine glycosylation occurs at Asn114. Xyloglucan-binding positions include 123–125 (QTN), 133–135 (NRE), 199–200 (DW), and Gly204. 2 cysteine pairs are disulfide-bonded: Cys228–Cys237 and Cys274–Cys287. Arg279 contacts xyloglucan.

Belongs to the glycosyl hydrolase 16 family. XTH group 1 subfamily. In terms of processing, contains at least one intrachain disulfide bond essential for its enzymatic activity. In terms of tissue distribution, root specific.

The protein localises to the secreted. Its subcellular location is the cell wall. The protein resides in the extracellular space. It is found in the apoplast. It catalyses the reaction breaks a beta-(1-&gt;4) bond in the backbone of a xyloglucan and transfers the xyloglucanyl segment on to O-4 of the non-reducing terminal glucose residue of an acceptor, which can be a xyloglucan or an oligosaccharide of xyloglucan.. Its function is as follows. Catalyzes xyloglucan endohydrolysis (XEH) and/or endotransglycosylation (XET). Cleaves and religates xyloglucan polymers, an essential constituent of the primary cell wall, and thereby participates in cell wall construction of growing tissues. The polypeptide is Probable xyloglucan endotransglucosylase/hydrolase protein 5 (XTH5) (Arabidopsis thaliana (Mouse-ear cress)).